The chain runs to 169 residues: 6,7-dimethyl-8-ribityllumazine synthase (169 aa).

Residues phenylalanine 24, 58 to 60, and 82 to 84 each bind 5-amino-6-(D-ribitylamino)uracil; these read ALE and AVV. 87-88 is a binding site for (2S)-2-hydroxy-3-oxobutyl phosphate; sequence ET. Histidine 90 acts as the Proton donor in catalysis. Residue asparagine 115 participates in 5-amino-6-(D-ribitylamino)uracil binding. (2S)-2-hydroxy-3-oxobutyl phosphate is bound at residue arginine 129.

The protein belongs to the DMRL synthase family.

The enzyme catalyses (2S)-2-hydroxy-3-oxobutyl phosphate + 5-amino-6-(D-ribitylamino)uracil = 6,7-dimethyl-8-(1-D-ribityl)lumazine + phosphate + 2 H2O + H(+). It participates in cofactor biosynthesis; riboflavin biosynthesis; riboflavin from 2-hydroxy-3-oxobutyl phosphate and 5-amino-6-(D-ribitylamino)uracil: step 1/2. Catalyzes the formation of 6,7-dimethyl-8-ribityllumazine by condensation of 5-amino-6-(D-ribitylamino)uracil with 3,4-dihydroxy-2-butanone 4-phosphate. This is the penultimate step in the biosynthesis of riboflavin. The protein is 6,7-dimethyl-8-ribityllumazine synthase of Cupriavidus metallidurans (strain ATCC 43123 / DSM 2839 / NBRC 102507 / CH34) (Ralstonia metallidurans).